The following is a 400-amino-acid chain: MTWICVITLFALASATLGNKVSRVGVLFPKTRNDNECTARGGLKGSCKSLIDCPSVLATLKDSFPVVCSWNGRFQPIVCCPDAIAPPPVTTTAVTVISTKEPKLPRLHISGCGKRKVKIDITTVGRSGSPILPPISTPQNSTGGRGIIAGGVEAKIGAWPWMAAVFVKNFGIGRFHCAGSIISNKYILSAAHAFLIGGRKLTPTRLAVRVGGHYIKRGQEYPVKDVIIHPHYVEKENYNDIAIIELKEELNFTDLVNPICLPDPETVTDPLKDRIVTAAGWGDLDFSGPRSQVLREVSIPVVPVDKCDQAYEKLNTPSLKNGITNNFLCAGLEEGGKDACQGDSGGPLMLVNNTRWIVVGVVSFGHKCAEEGYPGVYSRVASYLDWIAKVTNSLDHAVTN.

A signal peptide spans 1–23; the sequence is MTWICVITLFALASATLGNKVSR. The region spanning 36 to 80 is the Clip domain; it reads ECTARGGLKGSCKSLIDCPSVLATLKDSFPVVCSWNGRFQPIVCC. 3 disulfide bridges follow: Cys-37-Cys-79, Cys-47-Cys-68, and Cys-53-Cys-80. Residues 104–124 constitute a propeptide, activation peptide; that stretch reads LPRLHISGCGKRKVKIDITTV. The N-linked (GlcNAc...) asparagine glycan is linked to Asn-140. Residues 148-392 enclose the Peptidase S1 domain; sequence IAGGVEAKIG…YLDWIAKVTN (245 aa). Active-site charge relay system residues include His-192 and Asp-240. Asn-251 carries N-linked (GlcNAc...) asparagine glycosylation. 2 disulfide bridges follow: Cys-307-Cys-329 and Cys-340-Cys-368. Ser-344 serves as the catalytic Charge relay system. N-linked (GlcNAc...) asparagine glycosylation is present at Asn-352.

This sequence belongs to the peptidase S1 family. CLIP subfamily. Upon activation by factor C, it is converted to a two-chain active form composed of a light and a heavy chain linked by a disulfide bond.

Its subcellular location is the secreted. The catalysed reaction is Selective cleavage of 98-Arg-|-Ile-99 bond in Limulus proclotting enzyme to form active clotting enzyme.. Strongly inhibited by alpha2-plasmin inhibitor and DFP. Partially inhibited by benzamidine, leupeptin and PCMB. Its function is as follows. This enzyme is closely associated with an endotoxin-sensitive hemolymph coagulation system which may play important roles in both hemostasis and host defense mechanisms. Its active form catalyzes the activation of proclotting enzyme. Does not activate the mammalian coagulation factors factor IX, factor X, prothrombin, plasminogen, protein C or prekallikrein. Does not hydrolyze fibrinogen. Does not catalyze the activation of factor C or coagulogen. The chain is Clotting factor B from Tachypleus tridentatus (Japanese horseshoe crab).